Reading from the N-terminus, the 213-residue chain is A-type ATP synthase subunit D (213 aa).

It belongs to the V-ATPase D subunit family. Has multiple subunits with at least A(3), B(3), C, D, E, F, H, I and proteolipid K(x).

It localises to the cell membrane. Its function is as follows. Component of the A-type ATP synthase that produces ATP from ADP in the presence of a proton gradient across the membrane. The protein is A-type ATP synthase subunit D of Saccharolobus solfataricus (strain ATCC 35092 / DSM 1617 / JCM 11322 / P2) (Sulfolobus solfataricus).